The following is a 401-amino-acid chain: Lipid-A-disaccharide synthase (401 aa).

Belongs to the LpxB family.

It catalyses the reaction a lipid X + a UDP-2-N,3-O-bis[(3R)-3-hydroxyacyl]-alpha-D-glucosamine = a lipid A disaccharide + UDP + H(+). It functions in the pathway bacterial outer membrane biogenesis; LPS lipid A biosynthesis. In terms of biological role, condensation of UDP-2,3-diacylglucosamine and 2,3-diacylglucosamine-1-phosphate to form lipid A disaccharide, a precursor of lipid A, a phosphorylated glycolipid that anchors the lipopolysaccharide to the outer membrane of the cell. The sequence is that of Lipid-A-disaccharide synthase from Rhodospirillum centenum (strain ATCC 51521 / SW).